A 319-amino-acid chain; its full sequence is NADH-quinone oxidoreductase subunit H 2 (319 aa).

The next 9 helical transmembrane spans lie at 1–21 (MIGM…LLVL), 77–97 (ILAP…VAIG), 107–127 (VGLL…VLGA), 147–167 (LAYE…AGSF), 179–199 (VWFV…GIAA), 214–234 (LIAG…FLGE), 238–258 (VLLV…GPWL), 262–282 (VWFG…RATL), and 293–313 (FAWK…GIVV).

It belongs to the complex I subunit 1 family. In terms of assembly, NDH-1 is composed of 14 different subunits. Subunits NuoA, H, J, K, L, M, N constitute the membrane sector of the complex.

Its subcellular location is the cell inner membrane. It carries out the reaction a quinone + NADH + 5 H(+)(in) = a quinol + NAD(+) + 4 H(+)(out). Its function is as follows. NDH-1 shuttles electrons from NADH, via FMN and iron-sulfur (Fe-S) centers, to quinones in the respiratory chain. The immediate electron acceptor for the enzyme in this species is believed to be ubiquinone. Couples the redox reaction to proton translocation (for every two electrons transferred, four hydrogen ions are translocated across the cytoplasmic membrane), and thus conserves the redox energy in a proton gradient. This subunit may bind ubiquinone. The polypeptide is NADH-quinone oxidoreductase subunit H 2 (Rhodopseudomonas palustris (strain ATCC BAA-98 / CGA009)).